We begin with the raw amino-acid sequence, 579 residues long: Glypican-2 (579 aa).

Positions 1-21 (MSALRPLLLLLLHLCPGLGPG) are cleaved as a signal peptide. O-linked (Xyl...) (heparan sulfate) serine glycosylation is found at serine 55, serine 92, and serine 155. 2 disordered regions span residues 347–382 (GTPH…PTTA) and 483–552 (ALGQ…GRSR). Residues 361–379 (APREEASRSWRASAEEERP) are compositionally biased toward basic and acidic residues. O-linked (Xyl...) (heparan sulfate) serine glycans are attached at residues serine 498 and serine 500. The span at 517–527 (VVPPARPPRPP) shows a compositional bias: pro residues. Serine 556 carries the GPI-anchor amidated serine lipid modification. A propeptide spans 557–579 (SVGLHTPLVLLLLPSALTLLVLR) (removed in mature form).

This sequence belongs to the glypican family. Interacts (via heparan sulfate) with PTN; this interaction promotes neurite outgrowth through binding of PTN with chondroitin sulfate of proteoglycans, thereby releasing PTPRS of chondroitin sulfate proteoglycans (CSPGs) and leading to binding with heparan sulfate of GPC2. Interacts (heparan sulfate chain) with MDK; this interaction is inhibited by heparin followed by chondroitin sulfate E; this interaction induces GPC2 clustering through heparan sulfate chain; this interaction induces neuronal cell adhesion and neurite outgrowth.

Its subcellular location is the cell membrane. The protein localises to the secreted. It localises to the extracellular space. Its function is as follows. Cell surface proteoglycan that bears heparan sulfate. May fulfill a function related to the motile behaviors of developing neurons. In Mus musculus (Mouse), this protein is Glypican-2 (Gpc2).